The following is a 1020-amino-acid chain: Retinoblastoma-related protein (1020 aa).

Composition is skewed to polar residues over residues 382 to 391 (SPTKTITSPL) and 398 to 409 (ASHTNGILGSTN). The tract at residues 382-409 (SPTKTITSPLSPHRSPASHTNGILGSTN) is disordered. Residues 415-616 (TPVSTAMTTA…EKGSSMYNSL (202 aa)) form a domain A region. The interval 415-869 (TPVSTAMTTA…NEIFIPAAKP (455 aa)) is pocket. The segment at 617-737 (TVARPSLSAE…PGGGGETCAE (121 aa)) is spacer. A domain B region spans residues 738–869 (TGINIFFSKI…NEIFIPAAKP (132 aa)).

It belongs to the retinoblastoma protein (RB) family.

It is found in the nucleus. In terms of biological role, regulator of biological processes that recruits a histone deacetylase to control gene transcription. May play a role in the entry into mitosis, negatively regulating the cell proliferation. Formation of stable complexes with geminiviridae replication-associated proteins may create a cellular environment which favors viral DNA replication. The polypeptide is Retinoblastoma-related protein (RBR) (Ricinus communis (Castor bean)).